Consider the following 299-residue polypeptide: HTH-type transcriptional regulator CynR (299 aa).

In terms of domain architecture, HTH lysR-type spans 1–58 (MLSRHINYFLAVAEHGSFTRAASALHVSQPALSQQIRQLEESLGVPLFDRSGRTIRLT). Residues 18–37 (FTRAASALHVSQPALSQQIR) constitute a DNA-binding region (H-T-H motif).

It belongs to the LysR transcriptional regulatory family.

It localises to the cytoplasm. Functionally, positively regulates the cynTSX operon, and negatively regulates its own transcription. Binds specifically to the cynR-cynTSX intergenic region. The sequence is that of HTH-type transcriptional regulator CynR (cynR) from Escherichia coli (strain K12).